Here is a 303-residue protein sequence, read N- to C-terminus: Ribosomal protein uL3 glutamine methyltransferase (303 aa).

It belongs to the protein N5-glutamine methyltransferase family. PrmB subfamily.

The catalysed reaction is L-glutaminyl-[ribosomal protein uL3] + S-adenosyl-L-methionine = N(5)-methyl-L-glutaminyl-[ribosomal protein uL3] + S-adenosyl-L-homocysteine + H(+). Methylates large ribosomal subunit protein uL3 on a specific glutamine residue. The protein is Ribosomal protein uL3 glutamine methyltransferase of Neisseria meningitidis serogroup A / serotype 4A (strain DSM 15465 / Z2491).